Here is a 467-residue protein sequence, read N- to C-terminus: MSVVVQHVEEKAVHSWSRISTAGKKALEEALLVFNPMSQDLSATEAQLVAFLQGLRDDGFQPTILRSGDVYGYSSCTANPPSQTKLQARAPNPTATSPPASAPRTAMRLPAGRATLLPMPLSGRLAKASTPALAKHATTNLLLSSLKQSSASHARGAAVGFPTHLYPGVYPAMRLSVVLEALVPLKTPMPCLGAKHKAQSLQLSLADSPLKLRKSSGKGPGNPRPKAPRKTTSKGPKCLTRKGPGAGPRRGSGHQSKTNRATGSPSVRRMKGGSALGTKTAQAKVARTLAKAARAQAKVARTQAKAAKARAKAKAAQVKAKAKAKAAQVKAKAKVMAAWAKAKAKAKAVRAKAKVARTQPRGRGRPKGSAKARTTRKGQKNRPETVGQKRKRAEEAKDLPPKKRTRLGPRSPKAWLGPGTAKLLKFRAIKVDRRSSDDEVRQRAQRILRVNLSPVIRLQPLLPYSAV.

Residues 81–105 (PSQTKLQARAPNPTATSPPASAPRT) form a disordered region. A compositionally biased stretch (low complexity) spans 88–105 (ARAPNPTATSPPASAPRT). S129 carries the phosphoserine modification. 2 disordered regions span residues 211-280 (KLRK…GTKT) and 349-416 (VRAK…KAWL). Positions 253-265 (GHQSKTNRATGSP) are enriched in polar residues. Residues 279–359 (KTAQAKVART…RAKAKVARTQ (81 aa)) adopt a coiled-coil conformation. The span at 349 to 380 (VRAKAKVARTQPRGRGRPKGSAKARTTRKGQK) shows a compositional bias: basic residues. A compositionally biased stretch (basic and acidic residues) spans 392-401 (RAEEAKDLPP).

The chain is Coiled-coil domain-containing protein 71 (CCDC71) from Homo sapiens (Human).